Consider the following 733-residue polypeptide: Hypermethylated in cancer 1 protein (733 aa).

In terms of domain architecture, BTB spans 47–110 (CDVIIVVQNA…IYTGRLADGA (64 aa)). A mediates HDAC-dependent transcriptional repression region spans residues 154–315 (KYCHLRGGGG…PFRGGSGSPG (162 aa)). R159 carries the omega-N-methylarginine modification. The segment at 189-209 (YPSPVGPPPPPAAEPPSGPEA) is disordered. The segment covering 192–206 (PVGPPPPPAAEPPSG) has biased composition (pro residues). S237 bears the Phosphoserine mark. Residues 241–247 (GLDLSKK) form an interaction with CTBP1 region. Positions 241 to 421 (GLDLSKKSPP…PGGHLEGYPC (181 aa)) are disordered. Position 248 is a phosphoserine (S248). Residues 284–293 (LALPSLPPLP) are compositionally biased toward pro residues. An N6-acetyllysine; alternate modification is found at K333. K333 participates in a covalent cross-link: Glycyl lysine isopeptide (Lys-Gly) (interchain with G-Cter in SUMO); alternate. The segment covering 344-361 (ELGRERGSPSERCEERGG) has biased composition (basic and acidic residues). A Phosphoserine modification is found at S366. The span at 368 to 380 (GGPPLGLAPPPRY) shows a compositional bias: pro residues. 5 consecutive C2H2-type zinc fingers follow at residues 439-459 (CIPC…VEAH), 509-529 (CASC…EKTH), 537-557 (CTIC…MRSH), 565-585 (CDAC…MRIH), and 593-613 (CQVC…MKMH). S704 carries the post-translational modification Phosphoserine.

It belongs to the krueppel C2H2-type zinc-finger protein family. Hic subfamily. As to quaternary structure, self-associates. Interacts with HIC2. Interacts with CTBP1 and CTBP2. Interacts with TCF7L2 and ARID1A. Interacts with MTA1 and MBD3; indicative for an association with the NuRD complex. Interacts with SIRT1. Acetylated on several residues, including Lys-333. Lys-333 is deacetylated by SIRT1. Post-translationally, sumoylated on Lys-333 by a PIAS family member, which enhances interaction with MTA1, positively regulates transcriptional repression activity and is enhanced by HDAC4. Ubiquitously expressed with highest levels found in lung, colon, prostate, thymus, testis and ovary. Expression is absent or decreased in many tumor cells.

It is found in the nucleus. Transcriptional repressor. Recognizes and binds to the consensus sequence '5-[CG]NG[CG]GGGCA[CA]CC-3'. May act as a tumor suppressor. Involved in development of head, face, limbs and ventral body wall. Involved in down-regulation of SIRT1 and thereby is involved in regulation of p53/TP53-dependent apoptotic DNA-damage responses. The specific target gene promoter association seems to be depend on corepressors, such as CTBP1 or CTBP2 and MTA1. In cooperation with MTA1 (indicative for an association with the NuRD complex) represses transcription from CCND1/cyclin-D1 and CDKN1C/p57Kip2 specifically in quiescent cells. Involved in regulation of the Wnt signaling pathway probably by association with TCF7L2 and preventing TCF7L2 and CTNNB1 association with promoters of TCF-responsive genes. Seems to repress transcription from E2F1 and ATOH1 which involves ARID1A, indicative for the participation of a distinct SWI/SNF-type chromatin-remodeling complex. Probably represses transcription of ACKR3, FGFBP1 and EFNA1. This chain is Hypermethylated in cancer 1 protein (HIC1), found in Homo sapiens (Human).